We begin with the raw amino-acid sequence, 423 residues long: uncharacterized protein (423 aa).

The Mg(2+) site is built by Lys-181, Asp-183, and Glu-184. At Lys-181 the chain carries N6-carboxylysine.

This sequence belongs to the RuBisCO large chain family. Type IV subfamily. Requires Mg(2+) as cofactor.

In terms of biological role, may be involved in sulfur metabolism and oxidative stress response. Does not show RuBisCO activity. This is an uncharacterized protein from Bordetella bronchiseptica (strain ATCC BAA-588 / NCTC 13252 / RB50) (Alcaligenes bronchisepticus).